Here is a 62-residue protein sequence, read N- to C-terminus: Small ribosomal subunit protein bS21 (62 aa).

A compositionally biased stretch (basic and acidic residues) spans valine 43–alanine 52. The disordered stretch occupies residues valine 43–phenylalanine 62. Residues arginine 53–phenylalanine 62 show a composition bias toward basic residues.

Belongs to the bacterial ribosomal protein bS21 family.

The polypeptide is Small ribosomal subunit protein bS21 (Levilactobacillus brevis (strain ATCC 367 / BCRC 12310 / CIP 105137 / JCM 1170 / LMG 11437 / NCIMB 947 / NCTC 947) (Lactobacillus brevis)).